A 629-amino-acid chain; its full sequence is FAST kinase domain-containing protein 4 (629 aa).

Residues Ile-559 to Asp-617 enclose the RAP domain.

Belongs to the FAST kinase family.

It localises to the mitochondrion matrix. Plays a role in processing of mitochondrial RNA precursors and in stabilization of a subset of mature mitochondrial RNA species, such as MT-CO1, MT-CO2, MT-CYB, MT-CO3, MT-ND3, MT-ND5 and MT-ATP8/6. May play a role in cell cycle progression. The chain is FAST kinase domain-containing protein 4 (Tbrg4) from Rattus norvegicus (Rat).